A 766-amino-acid chain; its full sequence is Phospholipid phosphatase-related protein type 4 (766 aa).

Ser-37 carries the phosphoserine modification. 4 helical membrane-spanning segments follow: residues Leu-68–Phe-88, Ala-120–Val-140, Phe-179–Leu-199, and Ser-248–Phe-268. The N-linked (GlcNAc...) asparagine glycan is linked to Asn-269. The next 2 helical transmembrane spans lie at Lys-277 to Thr-297 and Val-309 to Gly-329. Ser-347 carries the phosphoserine modification. Asn-363 carries an N-linked (GlcNAc...) asparagine glycan. At Ser-386 the chain carries Phosphoserine. Asn-433 is a glycosylation site (N-linked (GlcNAc...) asparagine). A Phosphoserine modification is found at Ser-439. Disordered stretches follow at residues Ser-454 to Tyr-503 and Thr-510 to Arg-529. Asn-456 is a glycosylation site (N-linked (GlcNAc...) asparagine). Residues Ser-462 and Ser-474 each carry the phosphoserine modification. N-linked (GlcNAc...) asparagine glycans are attached at residues Asn-515 and Asn-545. A Phosphoserine modification is found at Ser-608. 3 disordered regions span residues Pro-634–Ala-654, Asp-672–Thr-705, and Pro-741–Asp-766. Basic residues predominate over residues Arg-688–Gly-702. The segment covering Arg-743 to Asn-752 has biased composition (polar residues).

Belongs to the PA-phosphatase related phosphoesterase family. O-glycosylated. Probably at Ser-347. As to expression, specifically expressed in neurons (at protein level).

It is found in the postsynaptic density membrane. Its function is as follows. Postsynaptic density membrane protein that indirectly regulates glutamatergic synaptic transmission through lysophosphatidic acid (LPA)-mediated signaling pathways. Binds lysophosphatidic acid (LPA) and mediates its internalization into cells. Could act as receptor or a transporter of this lipid at the post-synaptic membrane. Modulates lysophosphatidic acid (LPA) activity in neuron axonal outgrowth during development by attenuating phospholipid-induced axon collapse. In Rattus norvegicus (Rat), this protein is Phospholipid phosphatase-related protein type 4.